We begin with the raw amino-acid sequence, 308 residues long: Probable GTP 3',8-cyclase (308 aa).

The 219-residue stretch at 4–222 folds into the Radical SAM core domain; the sequence is RFGRPLEDLR…KKLIRKKHFR (219 aa). Arginine 13 contributes to the GTP binding site. Residues cysteine 20, cysteine 24, and cysteine 27 each contribute to the [4Fe-4S] cluster site. Residue lysine 60 coordinates GTP. Glycine 64 contributes to the S-adenosyl-L-methionine binding site. Threonine 90 serves as a coordination point for GTP. Serine 114 provides a ligand contact to S-adenosyl-L-methionine. Position 151 (lysine 151) interacts with GTP. Residues cysteine 245 and cysteine 248 each coordinate [4Fe-4S] cluster. 250 to 252 provides a ligand contact to GTP; that stretch reads RIR. [4Fe-4S] cluster is bound at residue cysteine 262.

It belongs to the radical SAM superfamily. MoaA family. It depends on [4Fe-4S] cluster as a cofactor.

It carries out the reaction GTP + AH2 + S-adenosyl-L-methionine = (8S)-3',8-cyclo-7,8-dihydroguanosine 5'-triphosphate + 5'-deoxyadenosine + L-methionine + A + H(+). The protein operates within cofactor biosynthesis; molybdopterin biosynthesis. In terms of biological role, catalyzes the cyclization of GTP to (8S)-3',8-cyclo-7,8-dihydroguanosine 5'-triphosphate. This is Probable GTP 3',8-cyclase from Saccharolobus solfataricus (strain ATCC 35092 / DSM 1617 / JCM 11322 / P2) (Sulfolobus solfataricus).